A 107-amino-acid polypeptide reads, in one-letter code: Insulin-like peptide 6 (107 aa).

A signal peptide spans 1–33 (MVLKVPTSKVLLVLATLFAVAAMISSWMPQVAA). Disulfide bonds link Cys-48/Cys-91, Cys-60/Cys-105, and Cys-90/Cys-96. Positions 67–76 (LGDVFPNSFG) are cleaved as a propeptide — connecting peptide.

Belongs to the insulin family. In terms of assembly, heterodimer of a B chain and an A chain linked by two disulfide bonds. Expressed at a low level in the larval gut.

It is found in the secreted. In terms of biological role, possible ligand of InR/insulin-like receptor. This Drosophila melanogaster (Fruit fly) protein is Insulin-like peptide 6.